A 501-amino-acid polypeptide reads, in one-letter code: Actin-binding protein WASF3 (501 aa).

Residues 57 to 93 (NEANNFYIRANSLQDRIDRLAVKVTQLDSTVEEVSLQ) adopt a coiled-coil conformation. Tyr151 carries the post-translational modification Phosphotyrosine; by ABL1. Positions 162 to 206 (KEKMLQDTEDKRKEKRRQKEQKRVDGTTREVKKVRKARNRRQEWN) form a coiled coil. Residues 170-443 (EDKRKEKRRQ…PPISDARSDL (274 aa)) form a disordered region. Over residues 182–192 (QKRVDGTTREV) the composition is skewed to basic and acidic residues. Residues 219–237 (RLSQSVHHGASSEGSLSPD) are compositionally biased toward polar residues. Tyr248 is subject to Phosphotyrosine; by ABL1. A compositionally biased stretch (polar residues) spans 256–267 (HALQAQPATPSY). The segment covering 302–312 (QQPPPPPPPQA) has biased composition (pro residues). Tyr337 is subject to Phosphotyrosine; by ABL1. Pro residues-rich tracts occupy residues 341 to 352 (SGPPPPPPPPMI) and 394 to 410 (APPP…PPGP). Over residues 411 to 422 (SSLSSSPMHGPP) the composition is skewed to low complexity. In terms of domain architecture, WH2 spans 439–456 (ARSDLLAAIRMGIQLKKV). Tyr485 bears the Phosphotyrosine; by ABL1 mark.

The protein belongs to the SCAR/WAVE family. In terms of assembly, binds actin and the Arp2/3 complex. Post-translationally, phosphorylation by ABL1 promotes lamellipodia formation and cell migration.

It localises to the cytoplasm. The protein localises to the cytoskeleton. Functionally, downstream effector molecules involved in the transmission of signals from tyrosine kinase receptors and small GTPases to the actin cytoskeleton. Plays a role in the regulation of cell morphology and cytoskeletal organization. Required in the control of cell shape. The polypeptide is Actin-binding protein WASF3 (Wasf3) (Mus musculus (Mouse)).